We begin with the raw amino-acid sequence, 512 residues long: Bifunctional purine biosynthesis protein PurH (512 aa).

In terms of domain architecture, MGS-like spans 1 to 144; it reads MKRALVSVSD…KNYHDVTIVV (144 aa).

This sequence belongs to the PurH family.

It catalyses the reaction (6R)-10-formyltetrahydrofolate + 5-amino-1-(5-phospho-beta-D-ribosyl)imidazole-4-carboxamide = 5-formamido-1-(5-phospho-D-ribosyl)imidazole-4-carboxamide + (6S)-5,6,7,8-tetrahydrofolate. The enzyme catalyses IMP + H2O = 5-formamido-1-(5-phospho-D-ribosyl)imidazole-4-carboxamide. The protein operates within purine metabolism; IMP biosynthesis via de novo pathway; 5-formamido-1-(5-phospho-D-ribosyl)imidazole-4-carboxamide from 5-amino-1-(5-phospho-D-ribosyl)imidazole-4-carboxamide (10-formyl THF route): step 1/1. Its pathway is purine metabolism; IMP biosynthesis via de novo pathway; IMP from 5-formamido-1-(5-phospho-D-ribosyl)imidazole-4-carboxamide: step 1/1. The protein is Bifunctional purine biosynthesis protein PurH of Limosilactobacillus reuteri (strain DSM 20016) (Lactobacillus reuteri).